Reading from the N-terminus, the 320-residue chain is Malate dehydrogenase (320 aa).

NAD(+) is bound by residues 10 to 15 and aspartate 34; that span reads GSGMIG. Residues arginine 83 and arginine 89 each coordinate substrate. NAD(+) is bound by residues asparagine 96 and 119-121; that span reads ITN. The substrate site is built by asparagine 121 and arginine 152. Histidine 176 (proton acceptor) is an active-site residue.

The protein belongs to the LDH/MDH superfamily. MDH type 3 family.

It catalyses the reaction (S)-malate + NAD(+) = oxaloacetate + NADH + H(+). Its function is as follows. Catalyzes the reversible oxidation of malate to oxaloacetate. This Rhizobium johnstonii (strain DSM 114642 / LMG 32736 / 3841) (Rhizobium leguminosarum bv. viciae) protein is Malate dehydrogenase.